A 232-amino-acid polypeptide reads, in one-letter code: MGQKVNPIGLRLGINRNWESRWFPSKATLPENIGEDYKIRKFLKTKLYYAGVSQILVERTAKKLRVTVVAARPGIIIGKKGGEIENLRSEVTKLVNKDIAINIKEERKAGSSAQLAAENVAMQLERRVAFRRAMKKVIQGAQKAGAKGIKVSVAGRLGGAEMARTEWYLEGRVPLHTLRARIDYGFAEAHTTYGNIGVKVWIFKGEVLQKGIQADKNEDTSPKKPRRARRGK.

A KH type-2 domain is found at 39–107; the sequence is IRKFLKTKLY…DIAINIKEER (69 aa). A compositionally biased stretch (basic and acidic residues) spans 213-222; the sequence is QADKNEDTSP. The tract at residues 213–232 is disordered; the sequence is QADKNEDTSPKKPRRARRGK. Residues 223–232 show a composition bias toward basic residues; the sequence is KKPRRARRGK.

It belongs to the universal ribosomal protein uS3 family. In terms of assembly, part of the 30S ribosomal subunit. Forms a tight complex with proteins S10 and S14.

Binds the lower part of the 30S subunit head. Binds mRNA in the 70S ribosome, positioning it for translation. The protein is Small ribosomal subunit protein uS3 of Campylobacter fetus subsp. fetus (strain 82-40).